The chain runs to 112 residues: Signal recognition particle 19 kDa protein (112 aa).

The protein belongs to the SRP19 family. Part of the signal recognition particle protein translocation system, which is composed of SRP and FtsY. Archaeal SRP consists of a 7S RNA molecule of 300 nucleotides and two protein subunits: SRP54 and SRP19.

The protein localises to the cytoplasm. In terms of biological role, involved in targeting and insertion of nascent membrane proteins into the cytoplasmic membrane. Binds directly to 7S RNA and mediates binding of the 54 kDa subunit of the SRP. This is Signal recognition particle 19 kDa protein from Aeropyrum pernix (strain ATCC 700893 / DSM 11879 / JCM 9820 / NBRC 100138 / K1).